Consider the following 696-residue polypeptide: MKQKFSSMIDRYTHQQLRIGLVSPQQISTWSKKILPNGEIVGEVTKPYTFHYKTNKPEKDGLFCERIFGPIKSGICACGNYRVIGDEKEDPQFCEQCGVEFVDSRIRRYQMGYIKLAYPVMHVWYLKRLPSYIVNLLDKPLNELEDLVYCGFYFARPIDKKPTFLRLRGLLEYEIQPWKYRIPIFFTTRSFDTFRNREMSTGGGSIRQQLANLDLRMIIDYSLVEWKELEEEEPTGNEWEDRKVGRRKDFLLRRMELAKHFIRTNIEPKWMVLCLLPVLPPELRPIYHIDEDKLVTSDINEIYRRIIYRNNTLTDLLTTSIATPEELIISQEKLLQEAVDALLDNGICGQPMRDDHNRIYKSLSDVIEGKEGRVRETLLGKRVDYSGRSVIVVGPSLSLHRCGLPREIAIELFQAFVIRDLIRKHLASNIGVAKSQIRKKKPIVWEILQEILDDHPVLLNRAPTLHRLGIQAFLPILVEGRAICLHPLVCKGFNADFDGDQMAVHVPLSLEAQAEARLLMFSHMNLLSPTIGDPISAPTQDMLSGLYVLTSGNRRGICVNRYNPCNRRNYQNEDNNYKYTKKKEPFFCNAYDAIGAYRQKRIHLGSPLWLRWRLDQRVIAAREAPIEIHYESLGTYYEIYGHYLIVRSIKKEILYIYIRTTLGHIYLYREIEEAIQGFWQGCCNSMLPAGIRVSPG.

Cysteine 76, cysteine 78, cysteine 94, and cysteine 97 together coordinate Zn(2+). Mg(2+)-binding residues include aspartate 496, aspartate 498, and aspartate 500.

The protein belongs to the RNA polymerase beta' chain family. RpoC1 subfamily. In terms of assembly, in plastids the minimal PEP RNA polymerase catalytic core is composed of four subunits: alpha, beta, beta', and beta''. When a (nuclear-encoded) sigma factor is associated with the core the holoenzyme is formed, which can initiate transcription. It depends on Mg(2+) as a cofactor. Zn(2+) is required as a cofactor.

It localises to the plastid. It is found in the chloroplast. It carries out the reaction RNA(n) + a ribonucleoside 5'-triphosphate = RNA(n+1) + diphosphate. Functionally, DNA-dependent RNA polymerase catalyzes the transcription of DNA into RNA using the four ribonucleoside triphosphates as substrates. The polypeptide is DNA-directed RNA polymerase subunit beta' (Guizotia abyssinica (Niger)).